Here is a 248-residue protein sequence, read N- to C-terminus: Mannose-binding protein C (248 aa).

A signal peptide spans Met-1–Ser-20. The region spanning Gly-42–Glu-99 is the Collagen-like domain. The segment at Ile-43–Glu-111 is disordered. Pro-47 is subject to 4-hydroxyproline. The segment covering Lys-49–Glu-61 has biased composition (basic and acidic residues). Pro-73, Pro-79, Pro-82, and Pro-88 each carry 4-hydroxyproline. The span at Pro-82–Lys-91 shows a compositional bias: low complexity. The stretch at Arg-112 to Leu-130 forms a coiled coil. Residues Val-134 to Glu-245 form the C-type lectin domain. Disulfide bonds link Cys-155–Cys-244 and Cys-222–Cys-236.

Oligomeric complex of 3 or more homotrimers. Interacts with MASP1 and MASP2. Interacts with MEP1A and MEP1B and may inhibit their catalytic activity. Hydroxylation on proline residues within the sequence motif, GXPG, is most likely to be 4-hydroxy as this fits the requirement for 4-hydroxylation in vertebrates.

It localises to the secreted. Calcium-dependent lectin involved in innate immune defense. Binds mannose, fucose and N-acetylglucosamine on different microorganisms and activates the lectin complement pathway. Binds to late apoptotic cells, as well as to apoptotic blebs and to necrotic cells, but not to early apoptotic cells, facilitating their uptake by macrophages. The chain is Mannose-binding protein C (MBL2) from Macaca fascicularis (Crab-eating macaque).